Consider the following 245-residue polypeptide: Uridylate kinase (245 aa).

16 to 19 (KLSG) is a binding site for ATP. An involved in allosteric activation by GTP region spans residues 24-29 (GDNGFG). A UMP-binding site is contributed by G59. Residues G60 and R64 each coordinate ATP. UMP contacts are provided by residues D78 and 139 to 146 (NGAPFFTT). N167, Y173, and D176 together coordinate ATP.

This sequence belongs to the UMP kinase family. In terms of assembly, homohexamer.

The protein localises to the cytoplasm. It catalyses the reaction UMP + ATP = UDP + ADP. The protein operates within pyrimidine metabolism; CTP biosynthesis via de novo pathway; UDP from UMP (UMPK route): step 1/1. Its activity is regulated as follows. Allosterically activated by GTP. Inhibited by UTP. Catalyzes the reversible phosphorylation of UMP to UDP. The protein is Uridylate kinase of Deinococcus radiodurans (strain ATCC 13939 / DSM 20539 / JCM 16871 / CCUG 27074 / LMG 4051 / NBRC 15346 / NCIMB 9279 / VKM B-1422 / R1).